Consider the following 185-residue polypeptide: Transcription factor E (185 aa).

The 84-residue stretch at 5 to 88 (KNKELLEIAQ…YWRLETKKLP (84 aa)) folds into the HTH TFE/IIEalpha-type domain.

It belongs to the TFE family. As to quaternary structure, monomer. Interaction with RNA polymerase subunits RpoF and RpoE is necessary for Tfe stimulatory transcription activity. Able to interact with Tbp and RNA polymerase in the absence of DNA promoter. Interacts both with the preinitiation and elongation complexes.

Functionally, transcription factor that plays a role in the activation of archaeal genes transcribed by RNA polymerase. Facilitates transcription initiation by enhancing TATA-box recognition by TATA-box-binding protein (Tbp), and transcription factor B (Tfb) and RNA polymerase recruitment. Not absolutely required for transcription in vitro, but particularly important in cases where Tbp or Tfb function is not optimal. It dynamically alters the nucleic acid-binding properties of RNA polymerases by stabilizing the initiation complex and destabilizing elongation complexes. Seems to translocate with the RNA polymerase following initiation and acts by binding to the non template strand of the transcription bubble in elongation complexes. The chain is Transcription factor E from Thermococcus kodakarensis (strain ATCC BAA-918 / JCM 12380 / KOD1) (Pyrococcus kodakaraensis (strain KOD1)).